We begin with the raw amino-acid sequence, 149 residues long: UPF0179 protein MA_3685 (149 aa).

The protein belongs to the UPF0179 family.

The chain is UPF0179 protein MA_3685 from Methanosarcina acetivorans (strain ATCC 35395 / DSM 2834 / JCM 12185 / C2A).